A 442-amino-acid polypeptide reads, in one-letter code: D-serine dehydratase 2 (442 aa).

N6-(pyridoxal phosphate)lysine is present on Lys118.

This sequence belongs to the serine/threonine dehydratase family. DsdA subfamily. In terms of assembly, monomer. Pyridoxal 5'-phosphate serves as cofactor.

The catalysed reaction is D-serine = pyruvate + NH4(+). This Escherichia coli O6:K15:H31 (strain 536 / UPEC) protein is D-serine dehydratase 2.